A 90-amino-acid polypeptide reads, in one-letter code: DNA-binding protein HU-alpha (90 aa).

It belongs to the bacterial histone-like protein family. Heterodimer of an alpha and a beta chain.

Its function is as follows. Histone-like DNA-binding protein which is capable of wrapping DNA to stabilize it, and thus to prevent its denaturation under extreme environmental conditions. The polypeptide is DNA-binding protein HU-alpha (hupA) (Aeromonas hydrophila).